Here is an 89-residue protein sequence, read N- to C-terminus: Small ribosomal subunit protein uS14 (89 aa).

Residues 32-51 (DYEGLQKLPKNSSPVRLHNR) are disordered.

This sequence belongs to the universal ribosomal protein uS14 family. In terms of assembly, part of the 30S ribosomal subunit. Contacts proteins S3 and S10.

In terms of biological role, binds 16S rRNA, required for the assembly of 30S particles and may also be responsible for determining the conformation of the 16S rRNA at the A site. This Christiangramia forsetii (strain DSM 17595 / CGMCC 1.15422 / KT0803) (Gramella forsetii) protein is Small ribosomal subunit protein uS14.